We begin with the raw amino-acid sequence, 280 residues long: Tryptophan synthase alpha chain (280 aa).

Residues Glu-49 and Asp-60 each act as proton acceptor in the active site.

Belongs to the TrpA family. As to quaternary structure, tetramer of two alpha and two beta chains.

It carries out the reaction (1S,2R)-1-C-(indol-3-yl)glycerol 3-phosphate + L-serine = D-glyceraldehyde 3-phosphate + L-tryptophan + H2O. It functions in the pathway amino-acid biosynthesis; L-tryptophan biosynthesis; L-tryptophan from chorismate: step 5/5. Functionally, the alpha subunit is responsible for the aldol cleavage of indoleglycerol phosphate to indole and glyceraldehyde 3-phosphate. The sequence is that of Tryptophan synthase alpha chain from Corynebacterium glutamicum (strain R).